The primary structure comprises 153 residues: Large ribosomal subunit protein uL15 (153 aa).

Residues 21–41 (RGIGSGKGKTGGRGIKGQKSR) are disordered. Residues 23 to 35 (IGSGKGKTGGRGI) are compositionally biased toward gly residues.

The protein belongs to the universal ribosomal protein uL15 family. As to quaternary structure, part of the 50S ribosomal subunit.

Its function is as follows. Binds to the 23S rRNA. This chain is Large ribosomal subunit protein uL15, found in Rickettsia felis (strain ATCC VR-1525 / URRWXCal2) (Rickettsia azadi).